The sequence spans 580 residues: FAD-dependent monooxygenase DEP4 (580 aa).

Residue 47-50 participates in FAD binding; sequence VWSK. Position 58–60 (58–60) interacts with NADP(+); it reads FAQ. V112 is a binding site for FAD. Residues 186–205, 222–223, and 354–355 each bind NADP(+); these read VGRSKSSYDAVYHLLCAGKK, AP, and DI. Position 473 (M473) interacts with FAD.

Belongs to the FAD-binding monooxygenase family. Requires FAD as cofactor.

Its pathway is polyketide biosynthesis. Its function is as follows. Part of the gene cluster that mediates the biosynthesis of depudecin, a highly oxidized eleven-carbon linear polyketide that acts as a histone deacetylase (HDAC) inhibitor and makes a small contribution to pathogenesis. The reducing polyketide synthase DEP5 is the central enzyme in depudecin biosynthesis by yielding the backbone polyketide chain. The monooxygenases DEP2 and DEP4, as well as the uncharacterized protein DEP1, then act as tailoring enzymes to modify the intermediate polyketide chain into depudecin. This is FAD-dependent monooxygenase DEP4 from Fusarium langsethiae.